Reading from the N-terminus, the 208-residue chain is 3-isopropylmalate dehydratase small subunit 2 (208 aa).

It belongs to the LeuD family. LeuD type 1 subfamily. Heterodimer of LeuC and LeuD.

The enzyme catalyses (2R,3S)-3-isopropylmalate = (2S)-2-isopropylmalate. The protein operates within amino-acid biosynthesis; L-leucine biosynthesis; L-leucine from 3-methyl-2-oxobutanoate: step 2/4. In terms of biological role, catalyzes the isomerization between 2-isopropylmalate and 3-isopropylmalate, via the formation of 2-isopropylmaleate. The chain is 3-isopropylmalate dehydratase small subunit 2 (leuD2) from Salmonella typhimurium (strain LT2 / SGSC1412 / ATCC 700720).